The chain runs to 153 residues: Lipoprotein signal peptidase (153 aa).

A run of 3 helical transmembrane segments spans residues 6–26, 60–80, and 85–105; these read IVAVIVLLLIGLDQLVKSYIV, QQLLFAVITLVVVIGAIWYLH, and DSFWMVLGLTLIIAGGLGNFI. Catalysis depends on residues D115 and D131. The helical transmembrane segment at 124–144 threads the bilayer; the sequence is FAIFNVADSYLTVGVIILLIA.

This sequence belongs to the peptidase A8 family.

It localises to the cell membrane. The enzyme catalyses Release of signal peptides from bacterial membrane prolipoproteins. Hydrolyzes -Xaa-Yaa-Zaa-|-(S,diacylglyceryl)Cys-, in which Xaa is hydrophobic (preferably Leu), and Yaa (Ala or Ser) and Zaa (Gly or Ala) have small, neutral side chains.. It participates in protein modification; lipoprotein biosynthesis (signal peptide cleavage). Functionally, this protein specifically catalyzes the removal of signal peptides from prolipoproteins. This chain is Lipoprotein signal peptidase, found in Streptococcus pneumoniae (strain ATCC BAA-255 / R6).